A 719-amino-acid chain; its full sequence is Glutamate--tRNA ligase, cytoplasmic (719 aa).

Position 93 (Ser-93) interacts with ATP. A disordered region spans residues 176 to 205 (SGKPVAAPKSKDSQQAVKGDGQDKGKPEVD). Over residues 195-204 (DGQDKGKPEV) the composition is skewed to basic and acidic residues. L-glutamate is bound at residue 217–219 (RFA). The short motif at 220–230 (PEPSGYLHIGH) is the 'HIGH' region element. ATP is bound at residue His-227. Residues 393 to 397 (YDFAC) and Arg-411 contribute to the L-glutamate site. ATP-binding positions include Glu-414 and 448-452 (LLSKR). A 'KMSKS' region motif is present at residues 448–452 (LLSKR).

Belongs to the class-I aminoacyl-tRNA synthetase family. Glutamate--tRNA ligase type 2 subfamily. Interacts with GLN2, COL4 and RPP13L4/ZAR1.

It is found in the cytoplasm. The protein localises to the cytosol. It catalyses the reaction tRNA(Glu) + L-glutamate + ATP = L-glutamyl-tRNA(Glu) + AMP + diphosphate. In terms of biological role, catalyzes the attachment of glutamate to tRNA(Glu) in a two-step reaction: glutamate is first activated by ATP to form Glu-AMP and then transferred to the acceptor end of tRNA(Glu). This is Glutamate--tRNA ligase, cytoplasmic from Arabidopsis thaliana (Mouse-ear cress).